The chain runs to 404 residues: Cysteine desulfurase IscS (404 aa).

Pyridoxal 5'-phosphate contacts are provided by residues Ala-75 to Thr-76, Asn-155, Gln-183, and Ser-203 to His-205. The residue at position 206 (Lys-206) is an N6-(pyridoxal phosphate)lysine. Residue Thr-243 coordinates pyridoxal 5'-phosphate. Residue Cys-328 is the Cysteine persulfide intermediate of the active site. Cys-328 provides a ligand contact to [2Fe-2S] cluster.

Belongs to the class-V pyridoxal-phosphate-dependent aminotransferase family. NifS/IscS subfamily. In terms of assembly, homodimer. Forms a heterotetramer with IscU, interacts with other sulfur acceptors. Pyridoxal 5'-phosphate is required as a cofactor.

The protein localises to the cytoplasm. The catalysed reaction is (sulfur carrier)-H + L-cysteine = (sulfur carrier)-SH + L-alanine. Its pathway is cofactor biosynthesis; iron-sulfur cluster biosynthesis. In terms of biological role, master enzyme that delivers sulfur to a number of partners involved in Fe-S cluster assembly, tRNA modification or cofactor biosynthesis. Catalyzes the removal of elemental sulfur atoms from cysteine to produce alanine. Functions as a sulfur delivery protein for Fe-S cluster synthesis onto IscU, an Fe-S scaffold assembly protein, as well as other S acceptor proteins. In Histophilus somni (strain 2336) (Haemophilus somnus), this protein is Cysteine desulfurase IscS.